Reading from the N-terminus, the 300-residue chain is Small ribosomal subunit biogenesis GTPase RsgA (300 aa).

Residues 69-231 (RSDEMRVKQF…LIDSPGFQAF (163 aa)) enclose the CP-type G domain. GTP contacts are provided by residues 119-122 (NKID) and 172-180 (GQSGMGKST). Zn(2+) is bound by residues Cys255, Cys260, His262, and Cys268.

It belongs to the TRAFAC class YlqF/YawG GTPase family. RsgA subfamily. As to quaternary structure, monomer. Associates with 30S ribosomal subunit, binds 16S rRNA. The cofactor is Zn(2+).

It localises to the cytoplasm. Its function is as follows. One of several proteins that assist in the late maturation steps of the functional core of the 30S ribosomal subunit. Helps release RbfA from mature subunits. May play a role in the assembly of ribosomal proteins into the subunit. Circularly permuted GTPase that catalyzes slow GTP hydrolysis, GTPase activity is stimulated by the 30S ribosomal subunit. The protein is Small ribosomal subunit biogenesis GTPase RsgA of Bordetella bronchiseptica (strain ATCC BAA-588 / NCTC 13252 / RB50) (Alcaligenes bronchisepticus).